Reading from the N-terminus, the 989-residue chain is MHPSTMRCMHLRPVTMHPTSRMLCWKRRLRPKGVRSPEAIRGRIQGTWRQKTVDLPAGTEICCFPSLPKAPICSTSTLMRLRSKTNAKRADFTETFESSTHGEAPAEWTTIDADGDGQGWLCLSSGQLDWLTAHGGTNVVSSFSWNGMALNPDNYLISKDVTGATKVKYYYAVNDGFPGDHYAVMISKTGTNAGDFTVVFEETPNGINKGGARFGLSTEADGAKPQSVWIERTVDLPAGTKYVAFRHYNCSDLNYILLDDIQFTMGGSPTPTDYTYTVYRDGTKIKEGLTETTFEEDGVATGNHEYCVEVKYTAGVSPKKCVNVTVNSTQFNPVKNLKAQPDGGDVVLKWEAPSAKKTEGSREVKRIGDGLFVTIEPANDVRANEAKVVLAADNVWGDNTGYQFLLDADHNTFGSVIPATGPLFTGTASSDLYSANFEYLIPANADPVVTTQNIIVTGQGEVVIPGGVYDYCITNPEPASGKMWIAGDGGNQPARYDDFTFEAGKKYTFTMRRAGMGDGTDMEVEDDSPASYTYTVYRDGTKIKEGLTETTYRDAGLSAQSHEYCVEVKYTAGVSPKVCVDYIPDGVEDVTVQKPHTLTVVGKTITVSWQGEAMIYDMNGRRLAAGRNTVVYTAQGGYYAVMVVVDGKSYVEETRYQVNLSWTRRLCADTSKHRSVIVSEYESVARPPFKEVGRLRFYAYYSNILLKQFVPKSCMKRLSYYLPHCKKGSFLRFPRSSTVITVCQFSWLEYLPVTQGVAGSSPVHTAKIRSCVEIVFRHSSIFVCYRSTGKYNYRMRLFNMLGKNFLRTKQKCLSLLRSAWDIGIKLVLFQEGRYMESPGQSDEERRTTIDFYGNGRYLLFRHSELLVENGYQVKAVVTMLGTKPMGRGHKVSPSMVKLYAQELGLPILQPDNLNEESFLDELRTYQPHLQIVVAFRMLPRSVWQMPPMGTINLHGSLLPMYRGAAPIQPRDTPWRYGKRELPPSASGMR.

2 repeats span residues 270–323 (TPTD…KCVN) and 528–581 (SPAS…VCVD). The disordered stretch occupies residues 969 to 989 (PRDTPWRYGKRELPPSASGMR).

Belongs to the peptidase C25 family.

The protein localises to the cytoplasmic vesicle. Cleaves human complement component C3. May enable P.gingivalis to evade complement-mediated killing during the immune response. Plays an important role in soft tissue infections and is a virulence factor. The chain is Protease PrtH (prtH) from Porphyromonas gingivalis (strain ATCC BAA-308 / W83).